A 248-amino-acid polypeptide reads, in one-letter code: MFGKVEEKLNNVLKTEGALYFILIDPDEKNCLEIAEKVKDYADAIILGGSIGITNLDETTKQIKEIIGDIPIILFPGNVDGLTPYADAVFFMSFMNSNNTYWTTTAPTLGAITVKKYNLEPISMAYLGIEPIKRTAVGFVGEVNEIPQRKPEIAGMYCLSAKYFGMRWAYLEAGSGAELPVSNEIIGISKKLSGINIIVGGGIRTPETAYQKVLSGADAIVTGTLIEDNPDAVKEMRNAIKKAGIDKL.

Mg(2+) contacts are provided by Asp-25 and Ser-50. Sn-glycerol 1-phosphate-binding positions include 170 to 176, 201 to 202, and 223 to 224; these read YLEAGSG, GG, and GT.

Belongs to the GGGP/HepGP synthase family. Group II subfamily. Mg(2+) is required as a cofactor.

Its subcellular location is the cytoplasm. The enzyme catalyses sn-glycerol 1-phosphate + (2E,6E,10E)-geranylgeranyl diphosphate = sn-3-O-(geranylgeranyl)glycerol 1-phosphate + diphosphate. It participates in membrane lipid metabolism; glycerophospholipid metabolism. Prenyltransferase that catalyzes the transfer of the geranylgeranyl moiety of geranylgeranyl diphosphate (GGPP) to the C3 hydroxyl of sn-glycerol-1-phosphate (G1P). This reaction is the first ether-bond-formation step in the biosynthesis of archaeal membrane lipids. The polypeptide is Geranylgeranylglyceryl phosphate synthase (Methanococcus aeolicus (strain ATCC BAA-1280 / DSM 17508 / OCM 812 / Nankai-3)).